The chain runs to 344 residues: Dihydroorotase (344 aa).

Zn(2+) is bound by residues H14 and H16. Substrate is bound by residues H16 to R18 and N42. K100, H137, and H175 together coordinate Zn(2+). K100 is modified (N6-carboxylysine). Residue H137 coordinates substrate. L220 serves as a coordination point for substrate. D248 is a binding site for Zn(2+). The active site involves D248. Residues H252 and A264 each contribute to the substrate site.

The protein belongs to the metallo-dependent hydrolases superfamily. DHOase family. Class II DHOase subfamily. Homodimer. Zn(2+) is required as a cofactor.

The catalysed reaction is (S)-dihydroorotate + H2O = N-carbamoyl-L-aspartate + H(+). It participates in pyrimidine metabolism; UMP biosynthesis via de novo pathway; (S)-dihydroorotate from bicarbonate: step 3/3. In terms of biological role, catalyzes the reversible cyclization of carbamoyl aspartate to dihydroorotate. The polypeptide is Dihydroorotase (Erythrobacter litoralis (strain HTCC2594)).